Here is a 129-residue protein sequence, read N- to C-terminus: Glycine cleavage system H protein (129 aa).

In terms of domain architecture, Lipoyl-binding spans L24 to K106. Residue K65 is modified to N6-lipoyllysine.

It belongs to the GcvH family. As to quaternary structure, the glycine cleavage system is composed of four proteins: P, T, L and H. (R)-lipoate is required as a cofactor.

The glycine cleavage system catalyzes the degradation of glycine. The H protein shuttles the methylamine group of glycine from the P protein to the T protein. The chain is Glycine cleavage system H protein from Prochlorococcus marinus (strain MIT 9312).